The following is a 364-amino-acid chain: Long-wave-sensitive opsin 1 (364 aa).

Topologically, residues 1–52 (MAHAWGPQRLAGGQPQANFEESTQGSIFTYTNSNSTRDPFEGPNYHIAPRWV) are extracellular. The O-linked (GlcNAc) serine glycan is linked to S22. Residue N34 is glycosylated (N-linked (GlcNAc...) asparagine). Residues 53–77 (YHLTSAWMVFVVIASVFTNGLVLAA) traverse the membrane as a helical segment. Residues 78–89 (TMRFKKLRHPLN) are Cytoplasmic-facing. The chain crosses the membrane as a helical span at residues 90–115 (WILVNLAIADLAETIIASTISVVNQM). The Extracellular portion of the chain corresponds to 116–129 (YGYFVLGHPLCVVE). A disulfide bond links C126 and C203. Residues 130 to 149 (GYTVSLCGITGLWSLAIISW) form a helical membrane-spanning segment. At 150-168 (ERWMVVCKPFGNVRFDAKL) the chain is on the cytoplasmic side. The helical transmembrane segment at 169–192 (AITGIAFSWIWAAVWTAPPIFGWS) threads the bilayer. Over 193 to 218 (RYWPHGLKTSCGPDVFSGSSYPGVQS) the chain is Extracellular. A helical transmembrane segment spans residues 219-246 (YMIVLMITCCFIPLSVIILCYLQVWLAI). Topologically, residues 247-268 (RAVAKQQKESESTQKAEKEVTR) are cytoplasmic. The helical transmembrane segment at 269–292 (MVMVMIFAYCLCWGPYTFFACFAA) threads the bilayer. The Extracellular segment spans residues 293–300 (AHPGYAFH). A helical membrane pass occupies residues 301-325 (PLVAALPAYFAKSATIYNPIIYVFM). K312 is subject to N6-(retinylidene)lysine. Residues 326–364 (NRQFRNCILQLFGKKVDDSSELSSVSKTEASSVSSVSPA) lie on the Cytoplasmic side of the membrane.

This sequence belongs to the G-protein coupled receptor 1 family. Opsin subfamily. Post-translationally, phosphorylated on some or all of the serine and threonine residues present in the C-terminal region. In terms of tissue distribution, expressed in retina (at protein level). Expressed in cone and/or rod photoreceptor cells (at protein level).

It is found in the membrane. In terms of biological role, visual pigments are the light-absorbing molecules that mediate vision. They consist of an apoprotein, opsin, covalently linked to cis-retinal. The sequence is that of Long-wave-sensitive opsin 1 (OPN1LW) from Bos taurus (Bovine).